Reading from the N-terminus, the 90-residue chain is Protein S100-A6 (90 aa).

EF-hand domains follow at residues 12–47 (LIGI…IGSK) and 48–83 (LQDA…LAMI). T28 and E33 together coordinate Ca(2+). At K40 the chain carries N6-acetyllysine. Position 46 is a phosphoserine (S46). N6-acetyllysine; alternate is present on K47. K47 is subject to N6-succinyllysine; alternate. Residues D61, N63, D65, E67, and E72 each coordinate Ca(2+).

This sequence belongs to the S-100 family. As to quaternary structure, homodimer; head to tail assembly of 2 subunits. Interacts with CACYBP in a calcium-dependent manner. Interacts with ANXA2 and ANXA11 (via N-terminus). Interacts with SUGT1. Interacts with TP53; has higher affinity for TP53 that is phosphorylated on its N-terminal domain, and lower affinity for TP53 that is phosphorylated on its C-terminal domain. Interacts with tropomyosin. Interacts with FKBP4. Interacts with PPP5C (via TPR repeats); the interaction is calcium-dependent and modulates PPP5C activity. Interacts with TPPP; this interaction inhibits TPPP dimerization.

The protein localises to the nucleus envelope. The protein resides in the cytoplasm. Its subcellular location is the cell membrane. In terms of biological role, may function as calcium sensor and modulator, contributing to cellular calcium signaling. May function by interacting with other proteins, such as TPR-containing proteins, and indirectly play a role in many physiological processes such as the reorganization of the actin cytoskeleton and in cell motility. Binds 2 calcium ions. Calcium binding is cooperative. The protein is Protein S100-A6 (S100A6) of Oryctolagus cuniculus (Rabbit).